A 291-amino-acid polypeptide reads, in one-letter code: Elongation factor Ts (291 aa).

The tract at residues threonine 80–valine 83 is involved in Mg(2+) ion dislocation from EF-Tu.

The protein belongs to the EF-Ts family.

It localises to the cytoplasm. In terms of biological role, associates with the EF-Tu.GDP complex and induces the exchange of GDP to GTP. It remains bound to the aminoacyl-tRNA.EF-Tu.GTP complex up to the GTP hydrolysis stage on the ribosome. The sequence is that of Elongation factor Ts from Acinetobacter baylyi (strain ATCC 33305 / BD413 / ADP1).